Consider the following 98-residue polypeptide: Co-chaperonin GroES 1 (98 aa).

This sequence belongs to the GroES chaperonin family. As to quaternary structure, heptamer of 7 subunits arranged in a ring. Interacts with the chaperonin GroEL.

It is found in the cytoplasm. Together with the chaperonin GroEL, plays an essential role in assisting protein folding. The GroEL-GroES system forms a nano-cage that allows encapsulation of the non-native substrate proteins and provides a physical environment optimized to promote and accelerate protein folding. GroES binds to the apical surface of the GroEL ring, thereby capping the opening of the GroEL channel. In Rhizobium meliloti (strain 1021) (Ensifer meliloti), this protein is Co-chaperonin GroES 1.